Here is a 686-residue protein sequence, read N- to C-terminus: MKPSWLQCHKVTSAGGLGGPLPGSSPARGASAALRALVVPGPRGGLGGRGCRALSSGSGSEYKTHFAASVTDPERFWGKAAEQISWYKPWTKTLENKHSPSTSWFVEGMLNVCYNAVDRHIENGKGDKIAIIYDSPVTNTKATFTYKEVLEQVSKLAGVLVKHGIKKGDTVVIYMPMIPQAMYTMLACARIGAIHSLIFGGFASKELSSRIDHVKPKVVVTASFGIEPGRRVEYVPLVEEALKIGQHKPDKILIYNRPNMEAVPLAPGRDLDWDEEMAKAQSHDCVPVLSEHPLYILYTSGTTGLPKGVIRPTGGYAVMLNWSMSSIYGLQPGEVWWAASDLGWVVGHSYICYGPLLHGNTTVLYEGKPVGTPDAGAYFRVLAEHGVAALFTAPTAIRAIRQQDPGAALGKQYSLTRFKTLFVAGERCDVETLEWSKNVFRVPVLDHWWQTETGSPITASCVGLGNSKTPPPGQAGKSVPGYNVMILDDNMQKLKARCLGNIVVKLPLPPGAFSGLWKNQEAFKHLYFEKFPGYYDTMDAGYMDEEGYVYVMSRVDDVINVAGHRISAGAIEESILSHGTVADCAVVGKEDPLKGHVPLALCVLRKDINATEEQVLEEIVKHVRQNIGPVAAFRNAVFVKQLPKTRSGKIPRSALSAIVNGKPYKITSTIEDPSIFGHVEEMLKQA.

A mitochondrion-targeting transit peptide spans 1 to 29; sequence MKPSWLQCHKVTSAGGLGGPLPGSSPARG. A CoA-binding site is contributed by 227 to 230; the sequence is EPGR. ATP contacts are provided by residues 425 to 427 and 446 to 451; these read GER and DHWWQT. Lys518 carries the N6-succinyllysine modification. An N6-acetyllysine modification is found at Lys524. ATP contacts are provided by Asp539, Arg554, and Arg565. Arg624 is a CoA binding site.

This sequence belongs to the ATP-dependent AMP-binding enzyme family.

The protein localises to the mitochondrion matrix. The enzyme catalyses acetate + ATP + CoA = acetyl-CoA + AMP + diphosphate. It carries out the reaction propanoate + ATP + CoA = propanoyl-CoA + AMP + diphosphate. It catalyses the reaction butanoate + ATP + CoA = butanoyl-CoA + AMP + diphosphate. Its function is as follows. Catalyzes the synthesis of acetyl-CoA from short-chain fatty acids. Propionate is the preferred substrate but can also utilize acetate and butyrate with a much lower affinity. This is Acyl-CoA synthetase short-chain family member 3, mitochondrial (ACSS3) from Pongo abelii (Sumatran orangutan).